The sequence spans 780 residues: Vacuolar protein sorting-associated protein 51 homolog (780 aa).

Ala-2 carries the N-acetylalanine modification. Disordered regions lie at residues 270–292 (STLVEDDDSSNDTESNDQHPAKI) and 615–651 (QGTFRKHKRTDSNGSNTTTSSRSNTLHNDKMARSNSQ). Over residues 273-284 (VEDDDSSNDTES) the composition is skewed to acidic residues. Over residues 626-639 (SNGSNTTTSSRSNT) the composition is skewed to low complexity.

Belongs to the VPS51 family. In terms of assembly, component of the Golgi-associated retrograde protein (GARP) complex, composed by VPS51, VPS52, VPS53 and VPS54. Component of the endosome-associated retrograde protein (EARP) complex, composed of VPS51, VPS52, VPS53 and VPS50. Interacts with VPS52. As to expression, expressed in primary and lateral roots, shoots of seedlings and flowers.

Its subcellular location is the golgi apparatus. The protein resides in the trans-Golgi network. It is found in the recycling endosome. The protein localises to the prevacuolar compartment. Functionally, acts as a component of the GARP complex that is involved in retrograde transport from early and late endosomes to the trans-Golgi network (TGN). The GARP complex is required for the maintenance of protein retrieval from endosomes to the TGN, acid hydrolase sorting, lysosome function, endosomal cholesterol traffic and autophagy. VPS51 participates in retrograde transport of acid hydrolase receptors, likely by promoting tethering and SNARE-dependent fusion of endosome-derived carriers to the TGN. Acts as a component of the EARP complex that is involved in endocytic recycling. The EARP complex associates with Rab4-positive endosomes and promotes recycling of internalized transferrin receptor (TFRC) to the plasma membrane. Required for vacuolar targeting and cellular trafficking. Involved in the regulation of vascular tissue patterning, probably by regulating PIN1 expression pattern, thus modulating auxin flux. Important to prevent PIN1 accumulation within margin cells, possibly by targeting PIN1 to the lytic vacuole. Regulates PIN1 and ATHB8 expression pattern in secondary veins. This Arabidopsis thaliana (Mouse-ear cress) protein is Vacuolar protein sorting-associated protein 51 homolog.